We begin with the raw amino-acid sequence, 768 residues long: Kelch domain-containing protein 7A (768 aa).

Residues 12-29 traverse the membrane as a helical segment; that stretch reads VVLSAAALLLVTVAYRLY. Residues 35-210 are disordered; it reads PAQRWGGNAQ…PAPLQGSSDM (176 aa). Ser77 bears the Phosphoserine mark. Over residues 104-118 the composition is skewed to basic and acidic residues; it reads TDRKSQRKGSGEERG. N-linked (GlcNAc...) asparagine glycosylation is present at Asn248. The tract at residues 304 to 352 is disordered; sequence LTEVPSPRPPPRSLGTGAASGGQAGDTKGAAERAASPQPGPSPSTRGFS. The stretch at 319 to 365 is one Kelch 1 repeat; the sequence is TGAASGGQAGDTKGAAERAASPQPGPSPSTRGFSRKESLLQIAENPE. Ser356 is modified (phosphoserine). The segment at 371–395 is disordered; the sequence is DGFWLPAPPCPDPGALPGSGRSSQE. Kelch repeat units follow at residues 483 to 529, 532 to 580, 581 to 623, and 626 to 668; these read QYLV…ICSL, YLFV…ALDG, HLYA…ATAC, and EIFV…AVNG.

It is found in the membrane. The chain is Kelch domain-containing protein 7A (KLHDC7A) from Pongo abelii (Sumatran orangutan).